Here is a 456-residue protein sequence, read N- to C-terminus: MDFEQISRSLLPLLGGKENIASAAHCATRLRLVLVDDALADQQAIGKIDGVKGCFRNAGQMQIIFGTGVVNKVYAAFIQAAGISESSKSEAADLAAKKLNPFQRIARLLSNIFVPIIPAIVASGLLMGLLGMVKTYGWVDPSNALYIMLDMCSSAAFIILPILIGFTAAREFGGNPYLGATLGGILTHPALTNAWGVAAGFHTMNFFGIEVAMIGYQGTVFPVLLAVWFMSMVEKRLRRVIPDALDLILTPFLTVIISGFIALLLIGPAGRALGDGISFILSTLISHAGWLAGLLFGGLYSVIVITGIHHSFHAIEAGLLGNPSIGVNFLLPIWAMANVAQGGACFAVWFKTKDAKIKAITLPSAFSAMLGITEAAIFGINLRFVKPFIAALVGGAAGGAWVVSMHVYMTAVGLTAIPGMAIVQASSLLNYIIGMAIAFAVAFALSLTLKYKTDAE.

Positions 4-87 (EQISRSLLPL…IQAAGISESS (84 aa)) constitute a PTS EIIB type-1 domain. Cysteine 26 functions as the Phosphocysteine intermediate; for EIIB activity in the catalytic mechanism. Positions 107–456 (RLLSNIFVPI…LTLKYKTDAE (350 aa)) constitute a PTS EIIC type-1 domain. 10 helical membrane-spanning segments follow: residues 112-132 (IFVP…LLGM), 144-164 (ALYI…PILI), 181-201 (TLGG…AAGF), 209-229 (IEVA…AVWF), 247-267 (LILT…LLIG), 288-308 (AGWL…ITGI), 329-349 (FLLP…FAVW), 360-380 (ITLP…IFGI), 388-408 (FIAA…MHVY), and 428-448 (LLNY…LSLT).

It is found in the cell inner membrane. The catalysed reaction is N(pros)-phospho-L-histidyl-[protein](out) + sucrose = sucrose 6(G)-phosphate(in) + L-histidyl-[protein]. The phosphoenolpyruvate-dependent sugar phosphotransferase system (sugar PTS), a major carbohydrate active transport system, catalyzes the phosphorylation of incoming sugar substrates concomitantly with their translocation across the cell membrane. This system is involved in sucrose transport. The protein is PTS system sucrose-specific EIIBC component of Klebsiella pneumoniae.